Reading from the N-terminus, the 217-residue chain is Peptide methionine sulfoxide reductase MsrA (217 aa).

The active site involves cysteine 56.

Belongs to the MsrA Met sulfoxide reductase family.

It catalyses the reaction L-methionyl-[protein] + [thioredoxin]-disulfide + H2O = L-methionyl-(S)-S-oxide-[protein] + [thioredoxin]-dithiol. It carries out the reaction [thioredoxin]-disulfide + L-methionine + H2O = L-methionine (S)-S-oxide + [thioredoxin]-dithiol. Functionally, has an important function as a repair enzyme for proteins that have been inactivated by oxidation. Catalyzes the reversible oxidation-reduction of methionine sulfoxide in proteins to methionine. This Corynebacterium melassecola protein is Peptide methionine sulfoxide reductase MsrA.